Here is a 351-residue protein sequence, read N- to C-terminus: Photosystem II D2 protein (351 aa).

A helical transmembrane segment spans residues 39–59 (TAYLAIGGWLTGTTFVTSWYT). Histidine 116 is a chlorophyll a binding site. The helical transmembrane segment at 123–139 (GFMLRQFELARLIGIRP) threads the bilayer. Residues glutamine 128 and asparagine 141 each coordinate pheophytin a. Residues 151–164 (VFVSVFLIYPLGQS) traverse the membrane as a helical segment. A chlorophyll a-binding site is contributed by histidine 196. The helical transmembrane segment at 206 to 226 (GALLSAIHGVTVENTLYQDGE) threads the bilayer. A plastoquinone-binding residues include histidine 213 and phenylalanine 260. Histidine 213 lines the Fe cation pocket. Histidine 267 contributes to the Fe cation binding site. The chain crosses the membrane as a helical span at residues 277 to 293 (GLWTSSIGIIGLALNLR).

Belongs to the reaction center PufL/M/PsbA/D family. As to quaternary structure, PSII is composed of 1 copy each of membrane proteins PsbA, PsbB, PsbC, PsbD, PsbE, PsbF, PsbH, PsbI, PsbJ, PsbK, PsbL, PsbM, PsbT, PsbX, PsbY, PsbZ, Psb30/Ycf12, peripheral proteins PsbO, CyanoQ (PsbQ), PsbU, PsbV and a large number of cofactors. It forms dimeric complexes. The D1/D2 heterodimer binds P680, chlorophylls that are the primary electron donor of PSII, and subsequent electron acceptors. It shares a non-heme iron and each subunit binds pheophytin, quinone, additional chlorophylls, carotenoids and lipids. There is also a Cl(-1) ion associated with D1 and D2, which is required for oxygen evolution. The PSII complex binds additional chlorophylls, carotenoids and specific lipids. is required as a cofactor.

It localises to the host cellular thylakoid membrane. The enzyme catalyses 2 a plastoquinone + 4 hnu + 2 H2O = 2 a plastoquinol + O2. Its function is as follows. Photosystem II (PSII) is a light-driven water:plastoquinone oxidoreductase that uses light energy to abstract electrons from H(2)O, generating O(2) and a proton gradient subsequently used for ATP formation. It consists of a core antenna complex that captures photons, and an electron transfer chain that converts photonic excitation into a charge separation. The D1/D2 (PsbA/PsbD) reaction center heterodimer binds P680, the primary electron donor of PSII as well as several subsequent electron acceptors. D2 is needed for assembly of a stable PSII complex. The chain is Photosystem II D2 protein (psbD) from Synechococcus phage S-RSM2.